The primary structure comprises 183 residues: ATP-dependent protease subunit HslV (183 aa).

Threonine 13 is an active-site residue. 3 residues coordinate Na(+): glycine 168, cysteine 171, and threonine 174.

It belongs to the peptidase T1B family. HslV subfamily. In terms of assembly, a double ring-shaped homohexamer of HslV is capped on each side by a ring-shaped HslU homohexamer. The assembly of the HslU/HslV complex is dependent on binding of ATP.

It is found in the cytoplasm. The enzyme catalyses ATP-dependent cleavage of peptide bonds with broad specificity.. Its activity is regulated as follows. Allosterically activated by HslU binding. Its function is as follows. Protease subunit of a proteasome-like degradation complex believed to be a general protein degrading machinery. The chain is ATP-dependent protease subunit HslV from Xanthomonas euvesicatoria pv. vesicatoria (strain 85-10) (Xanthomonas campestris pv. vesicatoria).